We begin with the raw amino-acid sequence, 471 residues long: Uronate isomerase (471 aa).

Belongs to the metallo-dependent hydrolases superfamily. Uronate isomerase family.

It carries out the reaction D-glucuronate = D-fructuronate. It catalyses the reaction aldehydo-D-galacturonate = keto-D-tagaturonate. Its pathway is carbohydrate metabolism; pentose and glucuronate interconversion. This is Uronate isomerase from Xanthomonas campestris pv. campestris (strain 8004).